Reading from the N-terminus, the 439-residue chain is SET domain-containing protein 4 (439 aa).

Residues 1 to 19 show a composition bias toward basic residues; the sequence is MQRRRGRTERARKRRRRSS. A disordered region spans residues 1–25; sequence MQRRRGRTERARKRRRRSSGSRAVN. Residues 47–272 form the SET domain; the sequence is TDLVPASFPG…KHQEVFICYG (226 aa). Y271 contacts S-adenosyl-L-methionine.

Belongs to the class V-like SAM-binding methyltransferase superfamily. SETD4 family. Forms a ternary complex with TBK1 and ZNF268; the interaction with TBK1 is ZNF268-dependent and leads to TBK1 monomethylation. Expressed in the forebrain subventricular zone, in quiescent neural stem cells.

Its subcellular location is the cytoplasm. It is found in the cytosol. The protein resides in the nucleus. The enzyme catalyses L-lysyl(4)-[histone H3] + S-adenosyl-L-methionine = N(6)-methyl-L-lysyl(4)-[histone H3] + S-adenosyl-L-homocysteine + H(+). It catalyses the reaction N(6)-methyl-L-lysyl(4)-[histone H3] + S-adenosyl-L-methionine = N(6),N(6)-dimethyl-L-lysyl(4)-[histone H3] + S-adenosyl-L-homocysteine + H(+). It carries out the reaction L-lysyl(20)-[histone H4] + S-adenosyl-L-methionine = N(6)-methyl-L-lysyl(20)-[histone H4] + S-adenosyl-L-homocysteine + H(+). The catalysed reaction is N(6)-methyl-L-lysyl(20)-[histone H4] + S-adenosyl-L-methionine = N(6),N(6)-dimethyl-L-lysyl(20)-[histone H4] + S-adenosyl-L-homocysteine + H(+). The enzyme catalyses N(6),N(6)-dimethyl-L-lysyl(20)-[histone H4] + S-adenosyl-L-methionine = N(6),N(6),N(6)-trimethyl-L-lysyl(20)-[histone H4] + S-adenosyl-L-homocysteine + H(+). It catalyses the reaction L-lysyl-[protein] + S-adenosyl-L-methionine = N(6)-methyl-L-lysyl-[protein] + S-adenosyl-L-homocysteine + H(+). In terms of biological role, protein-lysine N-methyltransferase that methylates both histones and non-histone proteins. Via its catalytic activity, regulates many processes, including cell proliferation, cell differentiation, inflammatory response and apoptosis. Regulates the inflammatory response by mediating mono- and dimethylation of 'Lys-4' of histone H3 (H3K4me1 and H3K4me2, respectively), leading to activate the transcription of pro-inflammatory cytokines IL6 and TNF-alpha. Also involved in the regulation of stem cell quiescence by catalyzing the trimethylation of 'Lys-20' of histone H4 (H4K20me3), thereby promoting heterochromatin formation. In the brain, epigenetically controls quiescence of neural stem cells for sustaining a protected neural stem cell population and maintaining a stem cell reservoir for neurogenesis. Involved in proliferation, migration, paracrine and myogenic differentiation of bone marrow mesenchymal stem cells (BMSCs). Through the catalysis of XRCC5/Ku70 trimethylation, regulates BAX-mediated apoptosis. SETD4-catalyzed XRCC5 methylation results in XRCC5 translocation to the cytoplasm, where it interacts with BAX, sequestering it from the mitochondria, hence preventing BAX-mediated apoptosis. This is SET domain-containing protein 4 from Mus musculus (Mouse).